The chain runs to 240 residues: Ribosomal RNA large subunit methyltransferase E (240 aa).

The span at 1-13 shows a compositional bias: polar residues; it reads MAKKPGSQNTSGR. Residues 1 to 20 are disordered; it reads MAKKPGSQNTSGRGQRDLKV. S-adenosyl-L-methionine is bound by residues Gly85, Trp87, Asp113, Asp129, and Asp153. The Proton acceptor role is filled by Lys193.

This sequence belongs to the class I-like SAM-binding methyltransferase superfamily. RNA methyltransferase RlmE family.

It is found in the cytoplasm. It carries out the reaction uridine(2552) in 23S rRNA + S-adenosyl-L-methionine = 2'-O-methyluridine(2552) in 23S rRNA + S-adenosyl-L-homocysteine + H(+). Its function is as follows. Specifically methylates the uridine in position 2552 of 23S rRNA at the 2'-O position of the ribose in the fully assembled 50S ribosomal subunit. The protein is Ribosomal RNA large subunit methyltransferase E of Roseobacter denitrificans (strain ATCC 33942 / OCh 114) (Erythrobacter sp. (strain OCh 114)).